Reading from the N-terminus, the 184-residue chain is MITEGAARRVHIIQGEYKVLNDPNAVLSTILGSCVAACLRDPVAGVGGMNHFLLPGSATSPTSGGDATRYGVHLMELLINGLLKQGARRDRLEAKIFGGAKTISTFSNVGEQNAAFAVQFLRDEGIPVVGSSTGGEHGRKLEYWPVSGRARQYPLTGAETQRTVALEQRPAAPQKPVETSIEFF.

It belongs to the CheD family.

It carries out the reaction L-glutaminyl-[protein] + H2O = L-glutamyl-[protein] + NH4(+). Its function is as follows. Probably deamidates glutamine residues to glutamate on methyl-accepting chemotaxis receptors (MCPs), playing an important role in chemotaxis. The chain is Probable chemoreceptor glutamine deamidase CheD from Rhizobium johnstonii (strain DSM 114642 / LMG 32736 / 3841) (Rhizobium leguminosarum bv. viciae).